The sequence spans 447 residues: MRYLPLTPEDRTEMLARIGAPSVDALFADIPAAKLDPALADLPAHKTELSVERTLGALSAQNVPAGSVPFFVGAGAYRHHVPATVDHLIQRSEFLTSYTPYQPEIAQGTLQYLFEFQTQVGELTGMEVANASMYDGSTAAAEAVLMAHRVTKRRKAVVAGNVHPHYRETIATLSLYADDAVVALSPVPQGGEDILSAIDGETSCVVVQSPDVFGNIVDLKPIAEKAHAAGALLIAVFTEVVSLGLIEPPGAQGADIVVGEGQSIGNPLTFGGPYVGLFATRQKYVRQMPGRLAGETVDASGKRGFVLTLSTREQHIRREKATSNICTNSGLCALAFTIHLTLLGETGLRKLARLNHANACKLADKLAAVPGVQVLNSAFFNEFTLRVPGKAVDVIEKLAAKGVLGGVPYARLAPKAGLDDLILVAATEINTDEDRAAYAAALKEVLA.

This sequence belongs to the GcvP family. N-terminal subunit subfamily. In terms of assembly, the glycine cleavage system is composed of four proteins: P, T, L and H. In this organism, the P 'protein' is a heterodimer of two subunits.

The catalysed reaction is N(6)-[(R)-lipoyl]-L-lysyl-[glycine-cleavage complex H protein] + glycine + H(+) = N(6)-[(R)-S(8)-aminomethyldihydrolipoyl]-L-lysyl-[glycine-cleavage complex H protein] + CO2. Functionally, the glycine cleavage system catalyzes the degradation of glycine. The P protein binds the alpha-amino group of glycine through its pyridoxal phosphate cofactor; CO(2) is released and the remaining methylamine moiety is then transferred to the lipoamide cofactor of the H protein. The polypeptide is Probable glycine dehydrogenase (decarboxylating) subunit 1 (Azorhizobium caulinodans (strain ATCC 43989 / DSM 5975 / JCM 20966 / LMG 6465 / NBRC 14845 / NCIMB 13405 / ORS 571)).